The chain runs to 126 residues: Thioredoxin domain-containing protein, mitochondrial (126 aa).

The Thioredoxin domain maps to 14–120 (SQKIATNTSF…ILEFLNHIET (107 aa)).

Belongs to the thioredoxin family.

Its subcellular location is the mitochondrion. This is Thioredoxin domain-containing protein, mitochondrial from Dictyostelium discoideum (Social amoeba).